A 169-amino-acid polypeptide reads, in one-letter code: 6,7-dimethyl-8-ribityllumazine synthase (169 aa).

Residues Tyr-30, 61-63 (ALE), and 90-92 (CVI) each bind 5-amino-6-(D-ribitylamino)uracil. 95-96 (ET) is a binding site for (2S)-2-hydroxy-3-oxobutyl phosphate. The active-site Proton donor is His-98. Position 123 (Asn-123) interacts with 5-amino-6-(D-ribitylamino)uracil. Arg-137 is a (2S)-2-hydroxy-3-oxobutyl phosphate binding site.

This sequence belongs to the DMRL synthase family.

The enzyme catalyses (2S)-2-hydroxy-3-oxobutyl phosphate + 5-amino-6-(D-ribitylamino)uracil = 6,7-dimethyl-8-(1-D-ribityl)lumazine + phosphate + 2 H2O + H(+). It participates in cofactor biosynthesis; riboflavin biosynthesis; riboflavin from 2-hydroxy-3-oxobutyl phosphate and 5-amino-6-(D-ribitylamino)uracil: step 1/2. Its function is as follows. Catalyzes the formation of 6,7-dimethyl-8-ribityllumazine by condensation of 5-amino-6-(D-ribitylamino)uracil with 3,4-dihydroxy-2-butanone 4-phosphate. This is the penultimate step in the biosynthesis of riboflavin. This chain is 6,7-dimethyl-8-ribityllumazine synthase, found in Methylorubrum populi (strain ATCC BAA-705 / NCIMB 13946 / BJ001) (Methylobacterium populi).